Reading from the N-terminus, the 556-residue chain is Potassium-transporting ATPase potassium-binding subunit (556 aa).

12 helical membrane passes run 3 to 23 (AHGVLQFLLFLALVLALTPIL), 57 to 77 (AAYAVSLLIFHLLAVFGLYAL), 129 to 149 (GLTVHNFLSAAAGIAVAVALM), 172 to 192 (LGLLLPLCLVGALVLVGQGVP), 247 to 267 (LVNLIHMLAIFAIGAALTNTF), 278 to 298 (WALLGAMAALFLAGLGAAWWA), 319 to 339 (LGVAASMLFAVVTTVTSCGAV), 346 to 366 (LLPLAGMIPMVNMLLGEVVVG), 371 to 391 (GLYGMVVFALLTVFIAGLMVG), 408 to 428 (LAVIAILATPVAVLGIGGLAI), 486 to 506 (FVVMIPVLAIAGALAAKMAVP), and 516 to 536 (GWLFVVLLVGIVLVVGGLTYF).

Belongs to the KdpA family. In terms of assembly, the system is composed of three essential subunits: KdpA, KdpB and KdpC.

Its subcellular location is the cell inner membrane. Functionally, part of the high-affinity ATP-driven potassium transport (or Kdp) system, which catalyzes the hydrolysis of ATP coupled with the electrogenic transport of potassium into the cytoplasm. This subunit binds the periplasmic potassium ions and delivers the ions to the membrane domain of KdpB through an intramembrane tunnel. This is Potassium-transporting ATPase potassium-binding subunit from Paramagnetospirillum magneticum (strain ATCC 700264 / AMB-1) (Magnetospirillum magneticum).